A 271-amino-acid chain; its full sequence is 4-diphosphocytidyl-2-C-methyl-D-erythritol kinase (271 aa).

Lys8 is an active-site residue. Pro90 to Ala100 serves as a coordination point for ATP. The active site involves Asp132.

This sequence belongs to the GHMP kinase family. IspE subfamily.

It carries out the reaction 4-CDP-2-C-methyl-D-erythritol + ATP = 4-CDP-2-C-methyl-D-erythritol 2-phosphate + ADP + H(+). It functions in the pathway isoprenoid biosynthesis; isopentenyl diphosphate biosynthesis via DXP pathway; isopentenyl diphosphate from 1-deoxy-D-xylulose 5-phosphate: step 3/6. In terms of biological role, catalyzes the phosphorylation of the position 2 hydroxy group of 4-diphosphocytidyl-2C-methyl-D-erythritol. This is 4-diphosphocytidyl-2-C-methyl-D-erythritol kinase from Parabacteroides distasonis (strain ATCC 8503 / DSM 20701 / CIP 104284 / JCM 5825 / NCTC 11152).